A 235-amino-acid polypeptide reads, in one-letter code: Sugar fermentation stimulation protein homolog (235 aa).

Belongs to the SfsA family.

In Pseudomonas paraeruginosa (strain DSM 24068 / PA7) (Pseudomonas aeruginosa (strain PA7)), this protein is Sugar fermentation stimulation protein homolog.